Reading from the N-terminus, the 177-residue chain is ATP synthase subunit b, chloroplastic (177 aa).

A helical membrane pass occupies residues 26-44; it reads IINLSIVLFVVIRFLGEAL.

It belongs to the ATPase B chain family. In terms of assembly, F-type ATPases have 2 components, F(1) - the catalytic core - and F(0) - the membrane proton channel. F(1) has five subunits: alpha(3), beta(3), gamma(1), delta(1), epsilon(1). F(0) has four main subunits: a(1), b(1), b'(1) and c(10-14). The alpha and beta chains form an alternating ring which encloses part of the gamma chain. F(1) is attached to F(0) by a central stalk formed by the gamma and epsilon chains, while a peripheral stalk is formed by the delta, b and b' chains.

It localises to the plastid. Its subcellular location is the chloroplast thylakoid membrane. Its function is as follows. F(1)F(0) ATP synthase produces ATP from ADP in the presence of a proton or sodium gradient. F-type ATPases consist of two structural domains, F(1) containing the extramembraneous catalytic core and F(0) containing the membrane proton channel, linked together by a central stalk and a peripheral stalk. During catalysis, ATP synthesis in the catalytic domain of F(1) is coupled via a rotary mechanism of the central stalk subunits to proton translocation. In terms of biological role, component of the F(0) channel, it forms part of the peripheral stalk, linking F(1) to F(0). The chain is ATP synthase subunit b, chloroplastic from Bigelowiella natans (Pedinomonas minutissima).